A 163-amino-acid chain; its full sequence is Secretory-abundant heat soluble protein 53582 (163 aa).

The first 19 residues, 1–19 (MARLFVAVALFGVVAFAAA), serve as a signal peptide directing secretion. Residues 22–51 (EWTGKTWLGSWASTDRAENWEAFVDALGLP) are SAHS-c1. The interval 67-95 (YKQGDKYHHEVSIPSKNFKKAIEYTLGTE) is SAHS-c2. The SAHS-c3 stretch occupies residues 108-157 (KYTEDGEKLVADVQIPSKNKQIHDIYEVQGDTLTKTYKVGDVVAKRWFTR).

Belongs to the Secretory-abundant heat soluble protein (SAHS) family.

The protein resides in the secreted. Its function is as follows. Secreted heat soluble protein acting as a molecular shield in water-deficient condition. Tardigrade-specific intrinsically disordered proteins (TDPs) are essential for desiccation tolerance by forming non-crystalline amorphous solids upon desiccation, and this vitrified state mirrors their protective capabilities. The protein is Secretory-abundant heat soluble protein 53582 of Hypsibius exemplaris (Freshwater tardigrade).